The primary structure comprises 313 residues: Olfactory receptor 10P1 (313 aa).

Topologically, residues 1 to 25 (MAGENHTTLPEFLLLGFSDLKALQG) are extracellular. Residue Asn-5 is glycosylated (N-linked (GlcNAc...) asparagine). A helical membrane pass occupies residues 26–46 (PLFWVVLLVYLVTLLGNSLII). Residues 47–54 (LLTQVSPA) are Cytoplasmic-facing. Residues 55–75 (LHSPMYFFLRQLSVVELFYTT) form a helical membrane-spanning segment. Residues 76-100 (DIVPRTLANLGSPHPQAISFQGCAA) are Extracellular-facing. A helical transmembrane segment spans residues 101 to 121 (QMYVFIVLGISECCLLTAMAY). Residues 122 to 140 (DRYVAICQPLRYSTLLSPR) are Cytoplasmic-facing. A helical transmembrane segment spans residues 141 to 161 (ACMAMVGTSWLTGIITATTHA). At 162 to 198 (SLIFSLPFRSHPIIPHFLCDILPVLRLASAGKHRSEI) the chain is on the extracellular side. A helical transmembrane segment spans residues 199–218 (SVMTATIVFIMIPFSLIVTS). Over 219-238 (YIRILGAILAMASTQSRRKV) the chain is Cytoplasmic. Residues 239–259 (FSTCSSHLLVVSLFFGTASIT) form a helical membrane-spanning segment. Topologically, residues 260–272 (YIRPQAGSSVTTD) are extracellular. The chain crosses the membrane as a helical span at residues 273 to 293 (RVLSLFYTVITPMLNPIIYTL). Topologically, residues 294-313 (RNKDVRRALRHLVKRQRPSP) are cytoplasmic.

Belongs to the G-protein coupled receptor 1 family.

The protein localises to the cell membrane. Functionally, odorant receptor. In Homo sapiens (Human), this protein is Olfactory receptor 10P1 (OR10P1).